The following is a 229-amino-acid chain: Potassium/proton antiporter CemA (229 aa).

A run of 3 helical transmembrane segments spans residues 6–26 (AFIPFFYFTSIVFLPWVISLC), 107–127 (ILHFSTNLISFVILSGYSFWG), and 189–209 (ILSGLVSTFPVILDTIFKYWI).

It belongs to the CemA family.

It is found in the plastid. It localises to the chloroplast inner membrane. It catalyses the reaction K(+)(in) + H(+)(out) = K(+)(out) + H(+)(in). Its function is as follows. Contributes to K(+)/H(+) antiport activity by supporting proton efflux to control proton extrusion and homeostasis in chloroplasts in a light-dependent manner to modulate photosynthesis. Prevents excessive induction of non-photochemical quenching (NPQ) under continuous-light conditions. Indirectly promotes efficient inorganic carbon uptake into chloroplasts. The protein is Potassium/proton antiporter CemA of Draba nemorosa (Woodland whitlowgrass).